The primary structure comprises 350 residues: Zinc finger protein 367 (350 aa).

The tract at residues 104 to 151 is disordered; it reads SGLRGRGAPPPAASASAAASGGEDEEEASSPDSGHLKDGIRRGRPRAD. Over residues 137 to 151 the composition is skewed to basic and acidic residues; the sequence is GHLKDGIRRGRPRAD. 2 consecutive C2H2-type zinc fingers follow at residues 167–189 and 195–219; these read IRCN…KRTH and YLCD…QRLH. Residues 290-327 form a disordered region; the sequence is KGKLVQKADQEQQDPLEYLQSDEEDDEKRGAQRRLQEQ. Positions 308 to 342 form a coiled coil; it reads LQSDEEDDEKRGAQRRLQEQRERLHGALALIELAN. Serine 310 is modified (phosphoserine). Basic and acidic residues predominate over residues 316–327; that stretch reads EKRGAQRRLQEQ.

Belongs to the krueppel C2H2-type zinc-finger protein family.

It localises to the nucleus. Its function is as follows. Transcriptional activator. Isoform 1 may be involved in transcriptional activation of erythroid genes. The protein is Zinc finger protein 367 (ZNF367) of Homo sapiens (Human).